The following is a 339-amino-acid chain: Ketol-acid reductoisomerase (NADP(+)) (339 aa).

One can recognise a KARI N-terminal Rossmann domain in the interval 1-182; it reads MRVYYDRDAD…GGGRSGVIET (182 aa). NADP(+)-binding positions include 24 to 27, arginine 48, serine 51, threonine 53, and 83 to 86; these read YGSQ and DELQ. Histidine 108 is a catalytic residue. Residue glycine 134 coordinates NADP(+). Positions 183 to 328 constitute a KARI C-terminal knotted domain; it reads TFKEECETDL…GKLRAMMPWI (146 aa). Residues aspartate 191, glutamate 195, glutamate 227, and glutamate 231 each coordinate Mg(2+). Serine 252 is a binding site for substrate.

It belongs to the ketol-acid reductoisomerase family. Mg(2+) is required as a cofactor.

It catalyses the reaction (2R)-2,3-dihydroxy-3-methylbutanoate + NADP(+) = (2S)-2-acetolactate + NADPH + H(+). The enzyme catalyses (2R,3R)-2,3-dihydroxy-3-methylpentanoate + NADP(+) = (S)-2-ethyl-2-hydroxy-3-oxobutanoate + NADPH + H(+). The protein operates within amino-acid biosynthesis; L-isoleucine biosynthesis; L-isoleucine from 2-oxobutanoate: step 2/4. It participates in amino-acid biosynthesis; L-valine biosynthesis; L-valine from pyruvate: step 2/4. In terms of biological role, involved in the biosynthesis of branched-chain amino acids (BCAA). Catalyzes an alkyl-migration followed by a ketol-acid reduction of (S)-2-acetolactate (S2AL) to yield (R)-2,3-dihydroxy-isovalerate. In the isomerase reaction, S2AL is rearranged via a Mg-dependent methyl migration to produce 3-hydroxy-3-methyl-2-ketobutyrate (HMKB). In the reductase reaction, this 2-ketoacid undergoes a metal-dependent reduction by NADPH to yield (R)-2,3-dihydroxy-isovalerate. This Brucella melitensis biotype 2 (strain ATCC 23457) protein is Ketol-acid reductoisomerase (NADP(+)).